The following is a 187-amino-acid chain: Elongation factor P (187 aa).

The protein belongs to the elongation factor P family.

The protein localises to the cytoplasm. The protein operates within protein biosynthesis; polypeptide chain elongation. In terms of biological role, involved in peptide bond synthesis. Stimulates efficient translation and peptide-bond synthesis on native or reconstituted 70S ribosomes in vitro. Probably functions indirectly by altering the affinity of the ribosome for aminoacyl-tRNA, thus increasing their reactivity as acceptors for peptidyl transferase. This chain is Elongation factor P, found in Kocuria rhizophila (strain ATCC 9341 / DSM 348 / NBRC 103217 / DC2201).